The primary structure comprises 453 residues: Tubulin beta-1 chain (453 aa).

GTP is bound by residues Q12, E71, S140, G144, T145, G146, N206, and N228. A Mg(2+)-binding site is contributed by E71. The disordered stretch occupies residues 431 to 453 (TADGVEGYEEEGYENDHPEDDEE). The segment covering 436-453 (EGYEEEGYENDHPEDDEE) has biased composition (acidic residues).

Belongs to the tubulin family. In terms of assembly, dimer of alpha and beta chains. A typical microtubule is a hollow water-filled tube with an outer diameter of 25 nm and an inner diameter of 15 nM. Alpha-beta heterodimers associate head-to-tail to form protofilaments running lengthwise along the microtubule wall with the beta-tubulin subunit facing the microtubule plus end conferring a structural polarity. Microtubules usually have 13 protofilaments but different protofilament numbers can be found in some organisms and specialized cells. Mg(2+) is required as a cofactor.

The protein localises to the cytoplasm. The protein resides in the cytoskeleton. Tubulin is the major constituent of microtubules, a cylinder consisting of laterally associated linear protofilaments composed of alpha- and beta-tubulin heterodimers. Microtubules grow by the addition of GTP-tubulin dimers to the microtubule end, where a stabilizing cap forms. Below the cap, tubulin dimers are in GDP-bound state, owing to GTPase activity of alpha-tubulin. This chain is Tubulin beta-1 chain (TUBB), found in Chondrus crispus (Carrageen Irish moss).